The sequence spans 149 residues: Flagellar assembly factor FliW (149 aa).

It belongs to the FliW family. In terms of assembly, interacts with translational regulator CsrA and flagellin(s).

The protein localises to the cytoplasm. Acts as an anti-CsrA protein, binds CsrA and prevents it from repressing translation of its target genes, one of which is flagellin. Binds to flagellin and participates in the assembly of the flagellum. This Thermotoga sp. (strain RQ2) protein is Flagellar assembly factor FliW.